The sequence spans 306 residues: MAMAITAKMVAELRAKTDAPMMECKKALTEAEGDFEKAEELLRVKLGSKAGKAASRVTAEGVVTLARDGDDVALVEINCETDFVTKNDSFLAFANAVAEGVVKNNPADLAALGAMPLAMDSFGPTVEDVRRGLIGKIGENMTVRRFKRFASGKAASYLHGTRIGVVVEFEGDEAAAKDVAMHVAAMKPVALSSADVPAELVAKERSVAAAKAAEDASVAQAAGKPVQSAEIVAKRIEGGVQKYLKEVSLNNQTFVKNDKQTVEQMLKEKATVIKSFTLYIVGEGIEKKVDDFAAEVAAQVAAAKGA.

The tract at residues 81-84 (TDFV) is involved in Mg(2+) ion dislocation from EF-Tu.

Belongs to the EF-Ts family.

Its subcellular location is the cytoplasm. Associates with the EF-Tu.GDP complex and induces the exchange of GDP to GTP. It remains bound to the aminoacyl-tRNA.EF-Tu.GTP complex up to the GTP hydrolysis stage on the ribosome. This is Elongation factor Ts from Polaromonas naphthalenivorans (strain CJ2).